A 667-amino-acid polypeptide reads, in one-letter code: Bifunctional polymyxin resistance protein ArnA (667 aa).

Residues 1–304 (MKAIVFAYHD…EMGIVTDVRL (304 aa)) are formyltransferase ArnAFT. His104 acts as the Proton donor; for formyltransferase activity in catalysis. (6R)-10-formyltetrahydrofolate-binding positions include Arg114 and 136–140 (VKKAD). The segment at 314–667 (RRTRVLILGV…TAAPKDELNA (354 aa)) is dehydrogenase ArnADH. NAD(+) contacts are provided by residues Asp347 and 368–369 (DI). UDP-alpha-D-glucuronate-binding positions include Ala393, Tyr398, and 432–433 (TS). The active-site Proton acceptor; for decarboxylase activity is the Glu434. Residues Arg460, Asn492, 526–535 (KLVDGGAQKR), and Tyr613 contribute to the UDP-alpha-D-glucuronate site. Arg619 functions as the Proton donor; for decarboxylase activity in the catalytic mechanism.

In the N-terminal section; belongs to the Fmt family. UDP-L-Ara4N formyltransferase subfamily. The protein in the C-terminal section; belongs to the NAD(P)-dependent epimerase/dehydratase family. UDP-glucuronic acid decarboxylase subfamily. In terms of assembly, homohexamer, formed by a dimer of trimers.

It catalyses the reaction UDP-alpha-D-glucuronate + NAD(+) = UDP-beta-L-threo-pentopyranos-4-ulose + CO2 + NADH. The enzyme catalyses UDP-4-amino-4-deoxy-beta-L-arabinose + (6R)-10-formyltetrahydrofolate = UDP-4-deoxy-4-formamido-beta-L-arabinose + (6S)-5,6,7,8-tetrahydrofolate + H(+). It functions in the pathway nucleotide-sugar biosynthesis; UDP-4-deoxy-4-formamido-beta-L-arabinose biosynthesis; UDP-4-deoxy-4-formamido-beta-L-arabinose from UDP-alpha-D-glucuronate: step 1/3. The protein operates within nucleotide-sugar biosynthesis; UDP-4-deoxy-4-formamido-beta-L-arabinose biosynthesis; UDP-4-deoxy-4-formamido-beta-L-arabinose from UDP-alpha-D-glucuronate: step 3/3. Its pathway is bacterial outer membrane biogenesis; lipopolysaccharide biosynthesis. Its function is as follows. Bifunctional enzyme that catalyzes the oxidative decarboxylation of UDP-glucuronic acid (UDP-GlcUA) to UDP-4-keto-arabinose (UDP-Ara4O) and the addition of a formyl group to UDP-4-amino-4-deoxy-L-arabinose (UDP-L-Ara4N) to form UDP-L-4-formamido-arabinose (UDP-L-Ara4FN). The modified arabinose is attached to lipid A and is required for resistance to polymyxin and cationic antimicrobial peptides. In Yersinia pseudotuberculosis serotype IB (strain PB1/+), this protein is Bifunctional polymyxin resistance protein ArnA.